Reading from the N-terminus, the 508-residue chain is MNEEQRKASGQVSSSDKKSEKDYSQYFEAVYIPPSLKDAKKRGKEEVEYNQFQIDERFQGLGNGRKFYIRTYGCQMNEHDTEVMAGIFMALGYEPTNSTEDANVILLNTCAIRENAENKVFGELGHLKALKREKPDLILGVCGCMSQEESVVNRILKKHPFVDLIFGTHNIHRLPELLSECYLSKEMVIEVWSKEGDVIENLPRARQGKIKGWVNIMYGCDKFCTYCIVPYTRGKERSRRPDEIIQEVRRLAAEGYKEITLLGQNVNAYGKDFEDMEYGLGHLMDELRKIDIPRIRFTTSHPRDFDDHLIEVLAKGGNLLDHIHLPVQSGSSSVLKLMARKYDRERYLDLVRKIKEAMPNASLTTDIIVGFPNETDEQFEETLSLYREVEFDAAYTFIYSPREGTPAAKMQDNVPMHVKKERLQRLNALVNEISAKKMKEYEGQTVEVLVEGESKNNPEILAGYTSKSKLVNFKAPKEAIGNIVKVKITQAKTWSLDGEMVGEAIEVN.

The interval 1–21 (MNEEQRKASGQVSSSDKKSEK) is disordered. Positions 65–183 (RKFYIRTYGC…LPELLSECYL (119 aa)) constitute an MTTase N-terminal domain. The [4Fe-4S] cluster site is built by C74, C110, C144, C220, C224, and C227. The 231-residue stretch at 206-436 (RQGKIKGWVN…NALVNEISAK (231 aa)) folds into the Radical SAM core domain. The TRAM domain maps to 439-502 (KEYEGQTVEV…TWSLDGEMVG (64 aa)).

The protein belongs to the methylthiotransferase family. MiaB subfamily. Monomer. The cofactor is [4Fe-4S] cluster.

It is found in the cytoplasm. The enzyme catalyses N(6)-dimethylallyladenosine(37) in tRNA + (sulfur carrier)-SH + AH2 + 2 S-adenosyl-L-methionine = 2-methylsulfanyl-N(6)-dimethylallyladenosine(37) in tRNA + (sulfur carrier)-H + 5'-deoxyadenosine + L-methionine + A + S-adenosyl-L-homocysteine + 2 H(+). Catalyzes the methylthiolation of N6-(dimethylallyl)adenosine (i(6)A), leading to the formation of 2-methylthio-N6-(dimethylallyl)adenosine (ms(2)i(6)A) at position 37 in tRNAs that read codons beginning with uridine. The polypeptide is tRNA-2-methylthio-N(6)-dimethylallyladenosine synthase (Bacillus pumilus (strain SAFR-032)).